Reading from the N-terminus, the 1390-residue chain is Hepatocyte growth factor receptor (1390 aa).

The N-terminal stretch at 1–24 (MKAPAVLAPGILVLLFTLVQRSNG) is a signal peptide. Over 25–932 (ECKEALAKSE…VIVQPDQNFT (908 aa)) the chain is Extracellular. The Sema domain occupies 27 to 515 (KEALAKSEMN…TGKKITKIPL (489 aa)). N45 carries N-linked (GlcNAc...) asparagine glycosylation. 4 cysteine pairs are disulfide-bonded: C95/C101, C98/C160, C133/C141, and C172/C175. N-linked (GlcNAc...) asparagine glycosylation occurs at N106. N149 is a glycosylation site (N-linked (GlcNAc...) asparagine). N202 is a glycosylation site (N-linked (GlcNAc...) asparagine). 2 disulfides stabilise this stretch: C298–C363 and C385–C397. Residues N399 and N405 are each glycosylated (N-linked (GlcNAc...) asparagine). Cystine bridges form between C520–C538, C526–C561, C529–C545, and C541–C551. IPT/TIG domains follow at residues 563–655 (PAIY…FSYV), 657–739 (PVIT…FSYR), and 742–836 (PIVY…LIYV). O-linked (Man) threonine glycosylation occurs at T582. N607 carries N-linked (GlcNAc...) asparagine glycosylation. C610 and C624 are disulfide-bonded. N635 carries an N-linked (GlcNAc...) asparagine glycan. O-linked (Man) threonine glycosylation is present at T676. C697 and C709 are oxidised to a cystine. A glycan (O-linked (Man) threonine) is linked at T761. N785, N879, and N930 each carry an N-linked (GlcNAc...) asparagine glycan. Residues 933-955 (GLIAGVVSISTALLLLLGFFLWL) form a helical membrane-spanning segment. Over 956–1390 (KKRKQIKDLG…TRPASFWETS (435 aa)) the chain is Cytoplasmic. The residue at position 966 (S966) is a Phosphoserine. The residue at position 977 (T977) is a Phosphothreonine. A phosphoserine mark is found at S990, S997, and S1000. Y1003 carries the post-translational modification Phosphotyrosine. Residues 1078–1345 (VHFNEVIGRG…RISAIFSTFI (268 aa)) enclose the Protein kinase domain. Residues 1084–1092 (IGRGHFGCV) and K1110 each bind ATP. The Proton acceptor role is filled by D1204. Residues 1212–1390 (LDEKFTVKVA…TRPASFWETS (179 aa)) are interaction with RANBP9. The residue at position 1230 (Y1230) is a Phosphotyrosine. 2 positions are modified to phosphotyrosine; by autocatalysis: Y1234 and Y1235. T1289 is subject to Phosphothreonine. The segment at 1320–1359 (WHPKAEMRPSFSELVSRISAIFSTFIGEHYVHVNATYVNV) is interaction with MUC20. A phosphotyrosine; by autocatalysis mark is found at Y1349 and Y1356. A Phosphotyrosine modification is found at Y1365.

It belongs to the protein kinase superfamily. Tyr protein kinase family. As to quaternary structure, heterodimer made of an alpha chain (50 kDa) and a beta chain (145 kDa) which are disulfide linked. Binds PLXNB1. Interacts when phosphorylated with downstream effectors including STAT3, PIK3R1, SRC, PCLG1, GRB2 and GAB1. Interacts with SPSB1, SPSB2 and SPSB4. Interacts with INPP5D/SHIP1. When phosphorylated at Tyr-1356, interacts with INPPL1/SHIP2. Interacts with RANBP9 and RANBP10, as well as SPSB1, SPSB2, SPSB3 and SPSB4. SPSB1 binding occurs in the presence and in the absence of HGF, however HGF treatment has a positive effect on this interaction. Interacts with MUC20; prevents interaction with GRB2 and suppresses hepatocyte growth factor-induced cell proliferation. Interacts with GRB10. Interacts with PTPN1 and PTPN2. Interacts with LECT2; this interaction may have an antagonistic effect on receptor activation. Interacts with HSP90AA1 and HSP90AB1; the interaction suppresses MET kinase activity. Interacts with tensin TNS3. Interacts (when phosphorylated) with tensin TNS4 (via SH2 domain); the interaction increases MET protein stability by inhibiting MET endocytosis and subsequent lysosomal degradation. In terms of assembly, (Microbial infection) Interacts via extracytoplasmic residues 25-656 with L.monocytogenes InlB; MET can bind HGF, its endogenous ligand, and InlB simultaneously. InlB probably dimerizes upon binding to MET, which encourages subsequent dimerization of MET. Autophosphorylated in response to ligand binding on Tyr-1234 and Tyr-1235 in the kinase domain leading to further phosphorylation of Tyr-1349 and Tyr-1356 in the C-terminal multifunctional docking site. Dephosphorylated by PTPRJ at Tyr-1349 and Tyr-1365. Dephosphorylated by PTPN1 and PTPN2. Post-translationally, ubiquitinated. Ubiquitination by CBL regulates MET endocytosis, resulting in decreasing plasma membrane receptor abundance, and in endosomal degradation and/or recycling of internalized receptors. In terms of processing, O-mannosylation of IPT/TIG domains by TMEM260 is required for protein maturation. O-mannosylated residues are composed of single mannose glycans that are not elongated or modified. (Microbial infection) Tyrosine phosphorylation is stimulated by L.monocytogenes InlB. Tyrosine phosphorylation is maximal 10-20 minutes after treatment with InlB and disappears by 60 minutes. The phosphorylated residues were not identified. As to expression, expressed in normal hepatocytes as well as in epithelial cells lining the stomach, the small and the large intestine. Found also in basal keratinocytes of esophagus and skin. High levels are found in liver, gastrointestinal tract, thyroid and kidney. Also present in the brain. Expressed in metaphyseal bone (at protein level).

It localises to the membrane. Its subcellular location is the secreted. It catalyses the reaction L-tyrosyl-[protein] + ATP = O-phospho-L-tyrosyl-[protein] + ADP + H(+). With respect to regulation, in its inactive state, the C-terminal tail interacts with the catalytic domain and inhibits the kinase activity. Upon ligand binding, the C-terminal tail is displaced and becomes phosphorylated, thus increasing the kinase activity. Its function is as follows. Receptor tyrosine kinase that transduces signals from the extracellular matrix into the cytoplasm by binding to hepatocyte growth factor/HGF ligand. Regulates many physiological processes including proliferation, scattering, morphogenesis and survival. Ligand binding at the cell surface induces autophosphorylation of MET on its intracellular domain that provides docking sites for downstream signaling molecules. Following activation by ligand, interacts with the PI3-kinase subunit PIK3R1, PLCG1, SRC, GRB2, STAT3 or the adapter GAB1. Recruitment of these downstream effectors by MET leads to the activation of several signaling cascades including the RAS-ERK, PI3 kinase-AKT, or PLCgamma-PKC. The RAS-ERK activation is associated with the morphogenetic effects while PI3K/AKT coordinates prosurvival effects. During embryonic development, MET signaling plays a role in gastrulation, development and migration of neuronal precursors, angiogenesis and kidney formation. During skeletal muscle development, it is crucial for the migration of muscle progenitor cells and for the proliferation of secondary myoblasts. In adults, participates in wound healing as well as organ regeneration and tissue remodeling. Also promotes differentiation and proliferation of hematopoietic cells. May regulate cortical bone osteogenesis. (Microbial infection) Acts as a receptor for Listeria monocytogenes internalin InlB, mediating entry of the pathogen into cells. The polypeptide is Hepatocyte growth factor receptor (MET) (Homo sapiens (Human)).